We begin with the raw amino-acid sequence, 214 residues long: Nascent polypeptide-associated complex subunit alpha (214 aa).

2 disordered regions span residues 1–57 (MSNP…NEKK) and 119–179 (ASAA…EDKD). Acidic residues predominate over residues 22–38 (AEDEGSDSSDSEGEGEV). Residues 52-117 (SRNEKKARKS…AKIEDLNSQA (66 aa)) enclose the NAC-A/B domain. The span at 119-128 (ASAAAQLAAQ) shows a compositional bias: low complexity. Over residues 129-159 (ESHDHAGHDHSGHDHSHDHGKGKAVDTGDEK) the composition is skewed to basic and acidic residues. Positions 160–171 (KEEEEDDTEEVD) are enriched in acidic residues. The region spanning 175–214 (LEDKDIELVMTQASVSRNKAVKALKENDNDIVNSIMALSI) is the UBA domain.

This sequence belongs to the NAC-alpha family. Part of the nascent polypeptide-associated complex (NAC), consisting of EGD2 and EGD1. NAC associates with ribosomes via EGD1.

It localises to the cytoplasm. The protein localises to the nucleus. Its function is as follows. Component of the nascent polypeptide-associated complex (NAC), a dynamic component of the ribosomal exit tunnel, protecting the emerging polypeptides from interaction with other cytoplasmic proteins to ensure appropriate nascent protein targeting. The NAC complex also promotes mitochondrial protein import by enhancing productive ribosome interactions with the outer mitochondrial membrane and blocks the inappropriate interaction of ribosomes translating non-secretory nascent polypeptides with translocation sites in the membrane of the endoplasmic reticulum. EGD2 may also be involved in transcription regulation. In Sclerotinia sclerotiorum (strain ATCC 18683 / 1980 / Ss-1) (White mold), this protein is Nascent polypeptide-associated complex subunit alpha (egd2).